Consider the following 319-residue polypeptide: tRNA-cytidine(32) 2-sulfurtransferase (319 aa).

The short motif at 43-48 (SGGKDS) is the PP-loop motif element. [4Fe-4S] cluster is bound by residues C118, C121, and C209.

Belongs to the TtcA family. As to quaternary structure, homodimer. The cofactor is Mg(2+). Requires [4Fe-4S] cluster as cofactor.

It is found in the cytoplasm. It catalyses the reaction cytidine(32) in tRNA + S-sulfanyl-L-cysteinyl-[cysteine desulfurase] + AH2 + ATP = 2-thiocytidine(32) in tRNA + L-cysteinyl-[cysteine desulfurase] + A + AMP + diphosphate + H(+). It functions in the pathway tRNA modification. In terms of biological role, catalyzes the ATP-dependent 2-thiolation of cytidine in position 32 of tRNA, to form 2-thiocytidine (s(2)C32). The sulfur atoms are provided by the cysteine/cysteine desulfurase (IscS) system. This chain is tRNA-cytidine(32) 2-sulfurtransferase, found in Neisseria meningitidis serogroup C / serotype 2a (strain ATCC 700532 / DSM 15464 / FAM18).